The sequence spans 208 residues: Large ribosomal subunit protein uL3 (208 aa).

Residues 116-148 (GFQGVIKRHGQSRGPMAHGSRYHRRPGSMGPVA) are disordered.

Belongs to the universal ribosomal protein uL3 family. In terms of assembly, part of the 50S ribosomal subunit. Forms a cluster with proteins L14 and L19.

In terms of biological role, one of the primary rRNA binding proteins, it binds directly near the 3'-end of the 23S rRNA, where it nucleates assembly of the 50S subunit. This chain is Large ribosomal subunit protein uL3, found in Streptococcus pyogenes serotype M5 (strain Manfredo).